The sequence spans 129 residues: Lysozyme C (129 aa).

In terms of domain architecture, C-type lysozyme spans 1-129; it reads KVYGRCELAA…VHAWIRGCRL (129 aa). 4 disulfides stabilise this stretch: cysteine 6–cysteine 127, cysteine 30–cysteine 115, cysteine 64–cysteine 80, and cysteine 76–cysteine 94. Catalysis depends on residues glutamate 35 and aspartate 52.

Belongs to the glycosyl hydrolase 22 family. As to quaternary structure, monomer.

Its subcellular location is the secreted. It carries out the reaction Hydrolysis of (1-&gt;4)-beta-linkages between N-acetylmuramic acid and N-acetyl-D-glucosamine residues in a peptidoglycan and between N-acetyl-D-glucosamine residues in chitodextrins.. Functionally, lysozymes have primarily a bacteriolytic function; those in tissues and body fluids are associated with the monocyte-macrophage system and enhance the activity of immunoagents. The sequence is that of Lysozyme C (LYZ) from Tragopan temminckii (Temminck's tragopan).